We begin with the raw amino-acid sequence, 118 residues long: Probable small nuclear ribonucleoprotein Sm D2 (118 aa).

The Sm domain maps to 29–115; it reads LSILTNSVKN…VILVVKNPLA (87 aa).

Belongs to the snRNP core protein family.

It localises to the nucleus. The protein localises to the cytoplasm. The protein resides in the cytosol. Its function is as follows. Plays a role in pre-mRNA splicing as a core component of the spliceosomal U1, U2, U4 and U5 small nuclear ribonucleoproteins (snRNPs), the building blocks of the spliceosome. The protein is Probable small nuclear ribonucleoprotein Sm D2 (snr-4) of Caenorhabditis elegans.